Consider the following 627-residue polypeptide: Ski protein homolog (627 aa).

Residues 1–12 are compositionally biased toward polar residues; it reads MSDSPIGSSQQV. 3 disordered regions span residues 1–22, 34–58, and 299–318; these read MSDSPIGSSQQVEPEHRTPDLM, LHEETRSDDDDDGQPSTSAKRKDSR, and EYDEAAPHQAPPKRPAMETP.

This sequence belongs to the SKI family. As to quaternary structure, may interact with daf-3. As to expression, expressed in ganglia in the head and tail and in the anterior pharynx.

It is found in the nucleus. Its function is as follows. Probable component of transcriptional regulatory complex with SMAD protein daf-3. Required to regulate entry into a developmentally arrested larval state known as dauer, in response to harsh environmental conditions. Involved in larvae undergoing cell-cycle arrest during the dauer stage. This chain is Ski protein homolog, found in Caenorhabditis elegans.